We begin with the raw amino-acid sequence, 338 residues long: Secretory carrier-associated membrane protein 1 (338 aa).

Positions Met1 to Ile63 are disordered. Ser2 carries the N-acetylserine modification. Ser2 carries the phosphoserine modification. Residues Ser2 to Leu155 are Cytoplasmic-facing. The residue at position 45 (Thr45) is a Phosphothreonine. A helical membrane pass occupies residues Trp156–Val176. Topologically, residues Asp177 to Gly181 are lumenal. The helical transmembrane segment at Val182 to Trp202 threads the bilayer. The Cytoplasmic segment spans residues Tyr203 to Arg217. Residues Phe218–Gly238 traverse the membrane as a helical segment. Residues Phe239–Gly261 are Lumenal-facing. The helical transmembrane segment at Ile262–Phe282 threads the bilayer. The Cytoplasmic portion of the chain corresponds to Lys283–Ile338.

It belongs to the SCAMP family. Interacts with SYNRG, ITSN1 and SLC9A7.

Its subcellular location is the golgi apparatus. The protein resides in the trans-Golgi network membrane. The protein localises to the recycling endosome membrane. Functionally, functions in post-Golgi recycling pathways. Acts as a recycling carrier to the cell surface. The sequence is that of Secretory carrier-associated membrane protein 1 (SCAMP1) from Sus scrofa (Pig).